Reading from the N-terminus, the 171-residue chain is 3-hydroxydecanoyl-[acyl-carrier-protein] dehydratase (171 aa).

Residue His70 is part of the active site.

Belongs to the thioester dehydratase family. FabA subfamily. Homodimer.

The protein localises to the cytoplasm. It catalyses the reaction a (3R)-hydroxyacyl-[ACP] = a (2E)-enoyl-[ACP] + H2O. The enzyme catalyses (3R)-hydroxydecanoyl-[ACP] = (2E)-decenoyl-[ACP] + H2O. It carries out the reaction (2E)-decenoyl-[ACP] = (3Z)-decenoyl-[ACP]. Its pathway is lipid metabolism; fatty acid biosynthesis. Necessary for the introduction of cis unsaturation into fatty acids. Catalyzes the dehydration of (3R)-3-hydroxydecanoyl-ACP to E-(2)-decenoyl-ACP and then its isomerization to Z-(3)-decenoyl-ACP. Can catalyze the dehydratase reaction for beta-hydroxyacyl-ACPs with saturated chain lengths up to 16:0, being most active on intermediate chain length. The protein is 3-hydroxydecanoyl-[acyl-carrier-protein] dehydratase of Shewanella halifaxensis (strain HAW-EB4).